Here is a 181-residue protein sequence, read N- to C-terminus: Large ribosomal subunit protein uL5c (181 aa).

This sequence belongs to the universal ribosomal protein uL5 family. In terms of assembly, part of the 50S ribosomal subunit; contacts the 5S rRNA.

It is found in the plastid. Its subcellular location is the chloroplast. In terms of biological role, binds 5S rRNA, forms part of the central protuberance of the 50S subunit. The sequence is that of Large ribosomal subunit protein uL5c (rpl5) from Guillardia theta (Cryptophyte).